The primary structure comprises 307 residues: Sex-lethal homolog (307 aa).

2 consecutive RRM domains span residues 85–163 and 171–251; these read TNLI…YARP and TNLY…LAEE. Basic residues predominate over residues 285–299; sequence HRGRHNKNRNQKPHP. The segment at 285-307 is disordered; the sequence is HRGRHNKNRNQKPHPYHNPQKFI.

Its subcellular location is the nucleus. Unknown; apparently not involved in somatic sex determination. This chain is Sex-lethal homolog (SXL), found in Chrysomya rufifacies (Hairy maggot blowfly).